We begin with the raw amino-acid sequence, 962 residues long: Glycine dehydrogenase (decarboxylating) (962 aa).

Lys-709 bears the N6-(pyridoxal phosphate)lysine mark.

This sequence belongs to the GcvP family. The glycine cleavage system is composed of four proteins: P, T, L and H. Pyridoxal 5'-phosphate is required as a cofactor.

The enzyme catalyses N(6)-[(R)-lipoyl]-L-lysyl-[glycine-cleavage complex H protein] + glycine + H(+) = N(6)-[(R)-S(8)-aminomethyldihydrolipoyl]-L-lysyl-[glycine-cleavage complex H protein] + CO2. The glycine cleavage system catalyzes the degradation of glycine. The P protein binds the alpha-amino group of glycine through its pyridoxal phosphate cofactor; CO(2) is released and the remaining methylamine moiety is then transferred to the lipoamide cofactor of the H protein. This is Glycine dehydrogenase (decarboxylating) from Shewanella sp. (strain ANA-3).